We begin with the raw amino-acid sequence, 80 residues long: Acyl carrier protein (80 aa).

Residues 2–77 enclose the Carrier domain; it reads SDIEQRVKKI…QAIDYAKAHV (76 aa). Ser37 bears the O-(pantetheine 4'-phosphoryl)serine mark.

The protein belongs to the acyl carrier protein (ACP) family. 4'-phosphopantetheine is transferred from CoA to a specific serine of apo-ACP by AcpS. This modification is essential for activity because fatty acids are bound in thioester linkage to the sulfhydryl of the prosthetic group.

The protein localises to the cytoplasm. It participates in lipid metabolism; fatty acid biosynthesis. In terms of biological role, carrier of the growing fatty acid chain in fatty acid biosynthesis. The polypeptide is Acyl carrier protein (Herminiimonas arsenicoxydans).